The sequence spans 466 residues: 3-isopropylmalate dehydratase large subunit (466 aa).

[4Fe-4S] cluster contacts are provided by cysteine 347, cysteine 407, and cysteine 410.

Belongs to the aconitase/IPM isomerase family. LeuC type 1 subfamily. As to quaternary structure, heterodimer of LeuC and LeuD. The cofactor is [4Fe-4S] cluster.

The catalysed reaction is (2R,3S)-3-isopropylmalate = (2S)-2-isopropylmalate. The protein operates within amino-acid biosynthesis; L-leucine biosynthesis; L-leucine from 3-methyl-2-oxobutanoate: step 2/4. Functionally, catalyzes the isomerization between 2-isopropylmalate and 3-isopropylmalate, via the formation of 2-isopropylmaleate. This chain is 3-isopropylmalate dehydratase large subunit, found in Serratia proteamaculans (strain 568).